A 361-amino-acid chain; its full sequence is Biotin synthase (361 aa).

In terms of domain architecture, Radical SAM core spans 47–278; the sequence is VHGDEVALCG…AAHIFVMGGR (232 aa). [4Fe-4S] cluster is bound by residues cysteine 65, cysteine 69, and cysteine 72. Residues serine 110, cysteine 143, and cysteine 203 each coordinate [2Fe-2S] cluster.

The protein belongs to the radical SAM superfamily. Biotin synthase family. Homodimer. [4Fe-4S] cluster serves as cofactor. It depends on [2Fe-2S] cluster as a cofactor.

It carries out the reaction (4R,5S)-dethiobiotin + (sulfur carrier)-SH + 2 reduced [2Fe-2S]-[ferredoxin] + 2 S-adenosyl-L-methionine = (sulfur carrier)-H + biotin + 2 5'-deoxyadenosine + 2 L-methionine + 2 oxidized [2Fe-2S]-[ferredoxin]. It participates in cofactor biosynthesis; biotin biosynthesis; biotin from 7,8-diaminononanoate: step 2/2. Catalyzes the conversion of dethiobiotin (DTB) to biotin by the insertion of a sulfur atom into dethiobiotin via a radical-based mechanism. This is Biotin synthase from Anaeromyxobacter dehalogenans (strain 2CP-C).